The sequence spans 66 residues: DNA-directed RNA polymerase subunit Rpo10 (66 aa).

Positions 7, 10, 44, and 45 each coordinate Zn(2+).

This sequence belongs to the archaeal Rpo10/eukaryotic RPB10 RNA polymerase subunit family. In terms of assembly, part of the RNA polymerase complex. Zn(2+) is required as a cofactor.

It localises to the cytoplasm. The catalysed reaction is RNA(n) + a ribonucleoside 5'-triphosphate = RNA(n+1) + diphosphate. Functionally, DNA-dependent RNA polymerase (RNAP) catalyzes the transcription of DNA into RNA using the four ribonucleoside triphosphates as substrates. The sequence is that of DNA-directed RNA polymerase subunit Rpo10 from Staphylothermus marinus (strain ATCC 43588 / DSM 3639 / JCM 9404 / F1).